The sequence spans 62 residues: Guanine nucleotide-binding protein subunit gamma (62 aa).

Residues 40 to 62 are disordered; the sequence is DMLVSGPTDQHNPFQEKKSCSVL. Residues 53–62 are compositionally biased toward basic and acidic residues; sequence FQEKKSCSVL. Position 59 is a cysteine methyl ester (Cys-59). A lipid anchor (S-geranylgeranyl cysteine) is attached at Cys-59. Residues 60–62 constitute a propeptide, removed in mature form; the sequence is SVL.

It belongs to the G protein gamma family. As to quaternary structure, g proteins are composed of 3 units, alpha, beta and gamma. Interacts with gpb-1 and gpb-2. As to expression, predominantly expressed in the central nervous system.

The protein resides in the cell membrane. Guanine nucleotide-binding proteins (G proteins) are involved as a modulator or transducer in various transmembrane signaling systems. The beta and gamma chains are required for the GTPase activity, for replacement of GDP by GTP, and for G protein-effector interaction. The polypeptide is Guanine nucleotide-binding protein subunit gamma (gpc-1) (Caenorhabditis elegans).